Consider the following 1142-residue polypeptide: Collagen alpha-1(XIX) chain (1142 aa).

The signal sequence occupies residues 1 to 23; it reads MRLTGPWKLWLWMSIFLLPASTS. The Laminin G-like domain occupies 50-234; that stretch reads NKLEVSGFDL…LHQLKIYCSA (185 aa). Disordered stretches follow at residues 288 to 680, 704 to 1009, and 1053 to 1142; these read IPNK…GDPI, PGLK…PGIP, and YGRP…TGGN. Collagen-like domains lie at 292–349, 350–391, and 392–433; these read GEAG…GEKG, DPAL…ALPG, and SLGI…GIQG. The interval 292-351 is triple-helical region 1 (COL1); it reads GEAGLPGAPGSPGQKGHKGEPGENGLHGAPGFPGQKGEQGFEGSKGETGEKGEQGEKGDP. Positions 335–350 are enriched in basic and acidic residues; it reads SKGETGEKGEQGEKGD. The interval 370-429 is triple-helical region 2 (COL2); that stretch reads GPPGPKGEKGDTGPPGPPALPGSLGIQGPQGPPGKEGQRGRRGKTGPPGKPGPPGPPGPP. Residues 390–404 are compositionally biased toward low complexity; that stretch reads PGSLGIQGPQGPPGK. Positions 417-429 are enriched in pro residues; the sequence is PGKPGPPGPPGPP. Composition is skewed to basic and acidic residues over residues 444-463 and 478-496; these read KDNK…DKGE and QKGE…DRGE. The tract at residues 448–688 is triple-helical region 3 (COL3); the sequence is GNDEHEAGGL…PIALPLLGDI (241 aa). Collagen-like domains are found at residues 474–516, 568–624, 626–678, 728–778, 779–814, 845–903, 904–947, and 948–1004; these read GPKG…GPPG, GPPG…GPQG, GIPG…PPGD, KGDI…APGP, TGPP…PPGP, GPPG…VPGE, PGER…GDRG, and PKGE…GSPG. Residues 640-651 are compositionally biased toward low complexity; it reads PGIQGPRGLPGL. Residues 700–818 are triple-helical region 4 (COL4); that stretch reads QASVPGLKSN…PGPPGPPGIP (119 aa). 2 stretches are compositionally biased toward basic and acidic residues: residues 720-731 and 743-752; these read GKYDSMARKGDI and EGPKGSKGER. Composition is skewed to pro residues over residues 806–817 and 840–852; these read PGKPGPPGPPGI and YPGP…PKGD. Residues 833–1012 are triple-helical region 5 (COL5); sequence GGVNVPSYPG…PGIPGIPADA (180 aa). Over residues 943-954 the composition is skewed to basic and acidic residues; sequence PGDRGPKGERGD. The short motif at 952 to 954 is the Cell attachment site element; that stretch reads RGD. The triple-helical region 6 (COL6) stretch occupies residues 1054–1111; it reads GRPGPPGKDGLPGPPGDPGPQGYRGQKGERGEPGIGLPGSPGLPGTSALGLPGSPGAP. Residues 1093–1107 are compositionally biased toward low complexity; that stretch reads SPGLPGTSALGLPGS. A compositionally biased stretch (pro residues) spans 1108–1119; the sequence is PGAPGPQGPPGP.

It belongs to the fibril-associated collagens with interrupted helices (FACIT) family. Oligomer; disulfide-linked. Post-translationally, prolines at the third position of the tripeptide repeating unit (G-X-Y) are hydroxylated in some or all of the chains. In terms of tissue distribution, localized to vascular, neuronal, mesenchymal, and some epithelial basement membrane zones in umbilical cord.

It localises to the secreted. The protein localises to the extracellular space. The protein resides in the extracellular matrix. In terms of biological role, may act as a cross-bridge between fibrils and other extracellular matrix molecules. Involved in skeletal myogenesis in the developing esophagus. May play a role in organization of the pericellular matrix or the sphinteric smooth muscle. This chain is Collagen alpha-1(XIX) chain (COL19A1), found in Homo sapiens (Human).